Consider the following 836-residue polypeptide: Ethylene receptor 3 (836 aa).

Transmembrane regions (helical) follow at residues 137-157 (LIAAAYFSIPLEILYFVAGLR), 166-186 (LVQFGAFIVLCGLTHLLTAFT), and 204-224 (LTALVSFLTAITLLTLIPQLL). The Cu cation site is built by C176 and H180. One can recognise a GAF domain in the interval 269-413 (DRHTVLYTTL…VVAGQVAVAL (145 aa)). Residues 416-452 (ATLLEESRAMRDRLAEQNRELLQARRDALMANEARQA) adopt a coiled-coil conformation. A Histidine kinase domain is found at 457–691 (MSQGMRRPIH…LVLRFQLQSP (235 aa)). The 117-residue stretch at 718 to 834 (LLIDDDDDIN…LKDELARILQ (117 aa)) folds into the Response regulatory domain.

This sequence belongs to the ethylene receptor family. Cu cation serves as cofactor.

The protein localises to the endoplasmic reticulum membrane. The catalysed reaction is ATP + protein L-histidine = ADP + protein N-phospho-L-histidine.. Its function is as follows. Ethylene receptor related to bacterial two-component regulators. Acts as a negative regulator of ethylene signaling. May delay the transition from the vegetative stage to the floral stage by up-regulating GI (GIGANTEA) and RCN1 and cause starch accumulation in stems by down-regulating the alpha-amylase AMY3D. This chain is Ethylene receptor 3 (ETR3), found in Oryza sativa subsp. japonica (Rice).